Reading from the N-terminus, the 375-residue chain is Serpin B5 (375 aa).

Residues Asn-99, Asn-133, Asn-188, Asn-298, and Asn-361 are each glycosylated (N-linked (GlcNAc...) asparagine).

Belongs to the serpin family. Ov-serpin subfamily. Interacts with IRF6.

It is found in the secreted. Its subcellular location is the extracellular space. Functionally, tumor suppressor. It blocks the growth, invasion, and metastatic properties of mammary tumors. As it does not undergo the S (stressed) to R (relaxed) conformational transition characteristic of active serpins, it exhibits no serine protease inhibitory activity. The sequence is that of Serpin B5 (Serpinb5) from Rattus norvegicus (Rat).